The following is a 57-amino-acid chain: UPF0434 protein Shal_2504 (57 aa).

The protein belongs to the UPF0434 family.

In Shewanella halifaxensis (strain HAW-EB4), this protein is UPF0434 protein Shal_2504.